The primary structure comprises 298 residues: UDP-N-acetylenolpyruvoylglucosamine reductase (298 aa).

The FAD-binding PCMH-type domain occupies 26 to 191 (KTGGPADWLA…LDATFALEPG (166 aa)). Arg-170 is a catalytic residue. The Proton donor role is filled by Ser-220. Residue Glu-290 is part of the active site.

This sequence belongs to the MurB family. It depends on FAD as a cofactor.

It is found in the cytoplasm. The catalysed reaction is UDP-N-acetyl-alpha-D-muramate + NADP(+) = UDP-N-acetyl-3-O-(1-carboxyvinyl)-alpha-D-glucosamine + NADPH + H(+). It participates in cell wall biogenesis; peptidoglycan biosynthesis. Functionally, cell wall formation. The polypeptide is UDP-N-acetylenolpyruvoylglucosamine reductase (Limosilactobacillus reuteri subsp. reuteri (strain JCM 1112) (Lactobacillus reuteri)).